Reading from the N-terminus, the 432-residue chain is MRVLVLGSGVIGTASAYYLARQGHEVVVVDRQNGPALETSFANAGQVSPGYASPWAAPGVPLKAIKWLLQKHAPLAIKATGDVDQYLWMAQMLRNCTAARYAVNKERMVRLSEYSRDCLDELRAETGIAYEGRQLGTTQLFRTQAQVDAAAKDIAVLEASGVPFELLDRDAIARVEPALAGVKHKLAGALRLPNDQTGDCQMFTTKLADMAKALGVEFRFGQNIQRLDAVGDRLNGVWIDGKLETADRYVLALGSYSPQLLKPLGVRAPVYPLKGYSLTVPITNAEMAPTSTILDETYKVAITRFDNRIRVGGMAEIAGFDLSLNPRRRETLEMITADLYPQGGDLSQAEFWTGLRPATPDGTPIVGATAYRNLFLNTGHGTLGWTMACGSGRLLADLIGSKRPQISAEGLDISRYSGKNRELEAAPQPLRT.

3–17 (VLVLGSGVIGTASAY) serves as a coordination point for FAD.

This sequence belongs to the DadA oxidoreductase family. Requires FAD as cofactor.

It carries out the reaction a D-alpha-amino acid + A + H2O = a 2-oxocarboxylate + AH2 + NH4(+). Its pathway is amino-acid degradation; D-alanine degradation; NH(3) and pyruvate from D-alanine: step 1/1. Oxidative deamination of D-amino acids. The polypeptide is D-amino acid dehydrogenase (Ectopseudomonas mendocina (strain ymp) (Pseudomonas mendocina)).